Consider the following 79-residue polypeptide: Cytochrome b (79 aa).

The next 3 helical transmembrane spans lie at 1-7 (TALFLAM), 31-52 (WLIRNMHANGASFFFICIYLHI), and 67-79 (WNVGVVLLLLTMM). 2 residues coordinate heme b: histidine 37 and histidine 51.

Belongs to the cytochrome b family. The cytochrome bc1 complex contains 3 respiratory subunits (MT-CYB, CYC1 and UQCRFS1), 2 core proteins (UQCRC1 and UQCRC2) and probably 6 low-molecular weight proteins. The cofactor is heme b.

It localises to the mitochondrion inner membrane. Functionally, component of the ubiquinol-cytochrome c reductase complex (complex III or cytochrome b-c1 complex) that is part of the mitochondrial respiratory chain. The b-c1 complex mediates electron transfer from ubiquinol to cytochrome c. Contributes to the generation of a proton gradient across the mitochondrial membrane that is then used for ATP synthesis. This chain is Cytochrome b (mt-cyb), found in Amphilophus citrinellus (Midas cichlid).